We begin with the raw amino-acid sequence, 856 residues long: Paladin (856 aa).

A compositionally biased stretch (low complexity) spans 1 to 16 (MGTTASTAQQTVSAGT). The tract at residues 1-29 (MGTTASTAQQTVSAGTPFEGLQGSGTMDS) is disordered. The N-myristoyl glycine moiety is linked to residue G2. Position 86 is a phosphoserine (S86).

The protein belongs to the paladin family. As to expression, expressed in endothelial cells, and in certain larger vessels, in mural cells. In the brain, possibly expressed in microglia. Expressed in peripheral blood mononuclear cells (at protein level).

The protein localises to the cytoplasm. It localises to the cytosol. The sequence is that of Paladin (PALD1) from Homo sapiens (Human).